Reading from the N-terminus, the 299-residue chain is MSGGLSVLGLKDDDVRRFLTAKTHIGTAQLDFQMQQYCFKRRSDGVYLIDLKKTWEKLLLAARAIVAIENPAEVCAISSRPYGQRAVLKFASFTGATPIAGRFTPGTFTNQIQAAFREPRLLVVCDPREDHQPVTEASYVNIPVIAFCNTDACLRYVDVAIPCNNKAQHSIGLMWWMLTREVLRMRGSIIREIPWDTMVDLFFYRDPEEAEKEEQTQVVPERSIKEAPEFPPDQWGVGDTAAVQPEVADWSTAAEIPFQSAPAPAPAPAPATDDWASTGTATVGPTTEWGAATDNSWAS.

Residues 210–299 are disordered; the sequence is AEKEEQTQVV…GAATDNSWAS (90 aa). Residues 275–285 show a composition bias toward polar residues; sequence WASTGTATVGP.

This sequence belongs to the universal ribosomal protein uS2 family. As to quaternary structure, component of the small ribosomal subunit. Mature ribosomes consist of a small (40S) and a large (60S) subunit. The 40S subunit contains about 33 different proteins and 1 molecule of RNA (18S). The 60S subunit contains about 49 different proteins and 3 molecules of RNA (28S, 5.8S and 5S). Interacts with ribosomal protein S21.

The protein localises to the cytoplasm. Functionally, required for the assembly and/or stability of the 40S ribosomal subunit. Required for the processing of the 20S rRNA-precursor to mature 18S rRNA in a late step of the maturation of 40S ribosomal subunits. The polypeptide is Small ribosomal subunit protein uS2 (Ornithodoros parkeri (Soft tick)).